Consider the following 256-residue polypeptide: Small ribosomal subunit protein eS1 (256 aa).

Residues Met1–Lys18 are compositionally biased toward basic residues. Residues Met1–Thr20 are disordered. Position 2 is an N-acetylalanine; partial (Ala2).

The protein belongs to the eukaryotic ribosomal protein eS1 family. As to quaternary structure, component of the small ribosomal subunit. Mature ribosomes consist of a small (40S) and a large (60S) subunit. The 40S subunit contains about 33 different proteins and 1 molecule of RNA (18S). The 60S subunit contains about 49 different proteins and 3 molecules of RNA (25S, 5.8S and 5S).

The protein resides in the cytoplasm. This Aspergillus clavatus (strain ATCC 1007 / CBS 513.65 / DSM 816 / NCTC 3887 / NRRL 1 / QM 1276 / 107) protein is Small ribosomal subunit protein eS1 (rps1).